The following is a 366-amino-acid chain: 5-amino-6-(D-ribitylamino)uracil--L-tyrosine 4-hydroxyphenyl transferase (366 aa).

One can recognise a Radical SAM core domain in the interval 51 to 290; that stretch reads RCGNAITWVK…MIAISRLFLD (240 aa). Residues cysteine 70, cysteine 74, and cysteine 77 each coordinate [4Fe-4S] cluster.

Belongs to the radical SAM superfamily. CofH family. As to quaternary structure, consists of two subunits, CofG and CofH. [4Fe-4S] cluster is required as a cofactor.

The catalysed reaction is 5-amino-6-(D-ribitylamino)uracil + L-tyrosine + S-adenosyl-L-methionine = 5-amino-5-(4-hydroxybenzyl)-6-(D-ribitylimino)-5,6-dihydrouracil + 2-iminoacetate + 5'-deoxyadenosine + L-methionine + H(+). Its pathway is cofactor biosynthesis; coenzyme F0 biosynthesis. Catalyzes the radical-mediated synthesis of 5-amino-5-(4-hydroxybenzyl)-6-(D-ribitylimino)-5,6-dihydrouracil from 5-amino-6-(D-ribitylamino)uracil and L-tyrosine. The sequence is that of 5-amino-6-(D-ribitylamino)uracil--L-tyrosine 4-hydroxyphenyl transferase from Methanospirillum hungatei JF-1 (strain ATCC 27890 / DSM 864 / NBRC 100397 / JF-1).